Consider the following 154-residue polypeptide: UPF0178 protein BAV3236 (154 aa).

It belongs to the UPF0178 family.

The chain is UPF0178 protein BAV3236 from Bordetella avium (strain 197N).